The sequence spans 327 residues: 2-keto-3-deoxygluconate permease (327 aa).

Helical transmembrane passes span 10–30 (IPGG…TFSP), 42–62 (GMIT…GASI), 73–93 (KSGT…AIAS), 95–115 (IIPE…LALV), 139–159 (AGAF…IILG), 163–183 (IASF…VGFA), 199–219 (VQTL…LTVI), 224–244 (LLGI…LIIA), 254–274 (TAGI…VLIA), and 289–309 (SLVA…TSIW).

The protein belongs to the KdgT transporter family.

It is found in the cell inner membrane. It catalyses the reaction 2-dehydro-3-deoxy-D-gluconate(in) + H(+)(in) = 2-dehydro-3-deoxy-D-gluconate(out) + H(+)(out). Functionally, catalyzes the proton-dependent uptake of 2-keto-3-deoxygluconate (KDG) into the cell. The polypeptide is 2-keto-3-deoxygluconate permease (Escherichia coli O157:H7).